Here is a 133-residue protein sequence, read N- to C-terminus: Membrane protein FAM174B (133 aa).

A signal peptide spans 1–19; sequence MWLYTFAVALIVIAQEING. Residues 20–67 lie on the Extracellular side of the membrane; sequence EPHTRPSSATPLNATLPPQEEGSAQNTTDAAVGSRLSTILRDLPTIKN. A disordered region spans residues 22–47; sequence HTRPSSATPLNATLPPQEEGSAQNTT. Asn-32, Asn-45, and Asn-67 each carry an N-linked (GlcNAc...) asparagine glycan. Residues 68-88 form a helical membrane-spanning segment; that stretch reads ISIFICVLTTLLITCLVIKIC. At 89 to 133 the chain is on the cytoplasmic side; sequence RSARKIRKTRKYDIITTPAERVEMAPLNEENDEEDDSTLFDVKYR. Positions 113 to 133 are disordered; it reads APLNEENDEEDDSTLFDVKYR. A compositionally biased stretch (acidic residues) spans 117–126; it reads EENDEEDDST.

The protein belongs to the FAM174 family.

It is found in the cell membrane. Its subcellular location is the golgi apparatus. In terms of biological role, essential for Golgi structural integrity. The protein is Membrane protein FAM174B (Fam174b) of Danio rerio (Zebrafish).